Consider the following 380-residue polypeptide: Chaperone protein DnaJ (380 aa).

In terms of domain architecture, J spans 5–70; the sequence is DYYEVLGVAK…QKRAAYDQYG (66 aa). The segment at 140-218 adopts a CR-type zinc-finger fold; the sequence is GYDTQIRVPS…CHGAGKVKET (79 aa). 8 residues coordinate Zn(2+): cysteine 153, cysteine 156, cysteine 170, cysteine 173, cysteine 192, cysteine 195, cysteine 206, and cysteine 209. 4 CXXCXGXG motif repeats span residues 153–160, 170–177, 192–199, and 206–213; these read CEVCHGSG, CPTCSGSG, CPKCHGTG, and CGHCHGAG.

Belongs to the DnaJ family. In terms of assembly, homodimer. It depends on Zn(2+) as a cofactor.

Its subcellular location is the cytoplasm. Participates actively in the response to hyperosmotic and heat shock by preventing the aggregation of stress-denatured proteins and by disaggregating proteins, also in an autonomous, DnaK-independent fashion. Unfolded proteins bind initially to DnaJ; upon interaction with the DnaJ-bound protein, DnaK hydrolyzes its bound ATP, resulting in the formation of a stable complex. GrpE releases ADP from DnaK; ATP binding to DnaK triggers the release of the substrate protein, thus completing the reaction cycle. Several rounds of ATP-dependent interactions between DnaJ, DnaK and GrpE are required for fully efficient folding. Also involved, together with DnaK and GrpE, in the DNA replication of plasmids through activation of initiation proteins. This chain is Chaperone protein DnaJ, found in Paraburkholderia xenovorans (strain LB400).